Reading from the N-terminus, the 263-residue chain is Tryptophan synthase alpha chain (263 aa).

Residues E47 and D58 each act as proton acceptor in the active site.

It belongs to the TrpA family. Tetramer of two alpha and two beta chains.

Its subcellular location is the plastid. The protein localises to the chloroplast. The enzyme catalyses (1S,2R)-1-C-(indol-3-yl)glycerol 3-phosphate + L-serine = D-glyceraldehyde 3-phosphate + L-tryptophan + H2O. It functions in the pathway amino-acid biosynthesis; L-tryptophan biosynthesis; L-tryptophan from chorismate: step 5/5. In terms of biological role, the alpha subunit is responsible for the aldol cleavage of indoleglycerol phosphate to indole and glyceraldehyde 3-phosphate. This Pyropia yezoensis (Susabi-nori) protein is Tryptophan synthase alpha chain.